A 700-amino-acid chain; its full sequence is Myotubularin-related protein 11 (700 aa).

A disordered region spans residues M1–S39. A Myotubularin phosphatase domain is found at L201 to Y644.

Belongs to the protein-tyrosine phosphatase family. Non-receptor class myotubularin subfamily.

The chain is Myotubularin-related protein 11 (Mtmr11) from Mus musculus (Mouse).